A 224-amino-acid chain; its full sequence is Proline/serine-rich protein C17A5.10 (224 aa).

Positions 1–10 are enriched in pro residues; the sequence is MTDDSVPPPS. The segment at 1 to 110 is disordered; the sequence is MTDDSVPPPS…SNYNTAKPPY (110 aa). The segment covering 31 to 52 has biased composition (low complexity); sequence TSTSAGHPSSSSSTLPNYAASS. Polar residues-rich tracts occupy residues 53–68, 77–94, and 101–110; these read LNSR…NAYS, PTSQ…STMY, and SNYNTAKPPY.

It belongs to the HUA1 family.

The protein resides in the cytoplasm. May be involved in assembly and disassembly of the actin cytoskeleton. The polypeptide is Proline/serine-rich protein C17A5.10 (Schizosaccharomyces pombe (strain 972 / ATCC 24843) (Fission yeast)).